The sequence spans 317 residues: MNVVNTLQIIVANMLIYSTPLIFTSIGGVFSERGGIVNVGLEGIMTIGAFSSVVFNLTTAGMFGSMTPWLSILFGALIGALFSSLHAVATVNLRADHIVSGTVLNLMAPALGVFLLQVFYQQGQININEQIGYWNVPLLSNIPVIGKIFFTQTSLPGFLAIVVAILAWYVLFKTRFGLRLRSVGENPQAADTLGINVYAYRWAGVLLSGVLGGVGGAIYAQAISGNFSVSTIAGQGFISLAAMIFGKWNPIGAMLSSLLFGLFTSLAVVGGQIPGIKEIPSSFLQMAPYVFTIIVLALFLGKAIAPKADGVNYIKSK.

Helical transmembrane passes span 9–29 (IIVA…IGGV), 35–55 (GIVN…SVVF), 62–82 (MFGS…GALF), 98–118 (IVSG…LLQV), 132–151 (GYWN…IFFT), 155–172 (LPGF…YVLF), 203–223 (AGVL…AQAI), 225–245 (GNFS…AMIF), 251–271 (IGAM…VVGG), and 286–306 (MAPY…AIAP).

This sequence belongs to the binding-protein-dependent transport system permease family. In terms of assembly, the complex is composed of two ATP-binding proteins (NupA), two transmembrane proteins (NupB and NupC) and a solute-binding protein (BmpA).

The protein resides in the cell membrane. Its function is as follows. Part of an ABC transporter complex involved in the uptake of all common nucleosides. Responsible for the translocation of the substrate across the membrane. The protein is Nucleoside ABC transporter permease protein NupC of Lactococcus lactis subsp. cremoris (strain MG1363).